Consider the following 399-residue polypeptide: Glucose-1-phosphate adenylyltransferase (399 aa).

Residues Gly-158, 174 to 175 (EK), and Ser-192 contribute to the alpha-D-glucose 1-phosphate site.

The protein belongs to the bacterial/plant glucose-1-phosphate adenylyltransferase family. As to quaternary structure, homotetramer.

It catalyses the reaction alpha-D-glucose 1-phosphate + ATP + H(+) = ADP-alpha-D-glucose + diphosphate. It functions in the pathway glycan biosynthesis; glycogen biosynthesis. Its function is as follows. Involved in the biosynthesis of ADP-glucose, a building block required for the elongation reactions to produce glycogen. Catalyzes the reaction between ATP and alpha-D-glucose 1-phosphate (G1P) to produce pyrophosphate and ADP-Glc. The chain is Glucose-1-phosphate adenylyltransferase from Streptomyces coelicolor (strain ATCC BAA-471 / A3(2) / M145).